The chain runs to 298 residues: Estradiol 17-beta-dehydrogenase 11 (298 aa).

A signal peptide spans 1–21 (MKYLLDLILLLPLLIVFCIES). Position 40 to 64 (40 to 64 (LITGAGHGIGRLTAYEFAKLNTKLV)) interacts with NADP(+). Substrate is bound at residue Ser172. Tyr185 (proton acceptor) is an active-site residue.

It belongs to the short-chain dehydrogenases/reductases (SDR) family. 17-beta-HSD 3 subfamily.

It is found in the endoplasmic reticulum. The protein localises to the lipid droplet. It carries out the reaction 17beta-estradiol + NAD(+) = estrone + NADH + H(+). The enzyme catalyses 17beta-estradiol + NADP(+) = estrone + NADPH + H(+). In terms of biological role, can convert androstan-3-alpha,17-beta-diol (3-alpha-diol) to androsterone in vitro, suggesting that it may participate in androgen metabolism during steroidogenesis. May act by metabolizing compounds that stimulate steroid synthesis and/or by generating metabolites that inhibit it. Has no activity toward DHEA (dehydroepiandrosterone), or A-dione (4-androste-3,17-dione), and only a slight activity toward testosterone to A-dione. The sequence is that of Estradiol 17-beta-dehydrogenase 11 (Hsd17b11) from Rattus norvegicus (Rat).